Reading from the N-terminus, the 660-residue chain is Phosphatidylinositol-3-phosphate phosphatase MTMR7 (660 aa).

Residues 126–504 form the Myotubularin phosphatase domain; that stretch reads GWVLIDLSEE…FMYKFWSGMY (379 aa). Residues asparagine 250, asparagine 275, and isoleucine 276 each coordinate a 1,2-diacyl-sn-glycero-3-phospho-(1D-myo-inositol-3-phosphate). The Phosphocysteine intermediate role is filled by cysteine 338. A 1,2-diacyl-sn-glycero-3-phospho-(1D-myo-inositol-3-phosphate) contacts are provided by serine 339, aspartate 340, glycine 341, tryptophan 342, aspartate 343, arginine 344, and arginine 384. Residues 514-558 adopt a coiled-coil conformation; the sequence is RQSVTDYLMAVKEETQQLEEELEALEERLEKIQKVQLNCTKVKSK. The interval 554-660 is disordered; sequence KVKSKQSEPS…DSDEAVFLTA (107 aa). Residues 566 to 596 show a composition bias toward polar residues; that stretch reads SGFSTSDNSIANTPQDYSGNMKSFPSRSPSQ. Threonine 578 bears the Phosphothreonine mark. Positions 641-653 are enriched in basic and acidic residues; the sequence is APSEDSGKDRDSD.

The protein belongs to the protein-tyrosine phosphatase family. Non-receptor class myotubularin subfamily. In terms of assembly, heterodimer (via C-terminus) with MTMR9 (via coiled coil domain); the interaction enhances MTMR7 catalytic activity. Does not homodimerize. Interacts with RAB1B (in GDP-bound form).

It is found in the cytoplasm. The protein localises to the endomembrane system. It catalyses the reaction a 1,2-diacyl-sn-glycero-3-phospho-(1D-myo-inositol-3-phosphate) + H2O = a 1,2-diacyl-sn-glycero-3-phospho-(1D-myo-inositol) + phosphate. The catalysed reaction is 1D-myo-inositol 1,3-bisphosphate + H2O = 1D-myo-inositol 1-phosphate + phosphate. With respect to regulation, interaction with MTMR9 increases phosphatase activity. Its function is as follows. Lipid phosphatase that specifically dephosphorylates the D-3 position of phosphatidylinositol 3-phosphate (PtdIns(3)P) and inositol 1,3-bisphosphate (Ins(1,3)P2). In Pongo abelii (Sumatran orangutan), this protein is Phosphatidylinositol-3-phosphate phosphatase MTMR7.